Here is a 245-residue protein sequence, read N- to C-terminus: Orotidine 5'-phosphate decarboxylase (245 aa).

Substrate contacts are provided by residues Asp22, Lys44, Asp71–Thr80, Thr131, Arg192, Gln201, Gly221, and Arg222. Lys73 acts as the Proton donor in catalysis.

Belongs to the OMP decarboxylase family. Type 1 subfamily. In terms of assembly, homodimer.

It carries out the reaction orotidine 5'-phosphate + H(+) = UMP + CO2. The protein operates within pyrimidine metabolism; UMP biosynthesis via de novo pathway; UMP from orotate: step 2/2. In terms of biological role, catalyzes the decarboxylation of orotidine 5'-monophosphate (OMP) to uridine 5'-monophosphate (UMP). The polypeptide is Orotidine 5'-phosphate decarboxylase (Salmonella typhimurium (strain LT2 / SGSC1412 / ATCC 700720)).